The sequence spans 376 residues: 23S rRNA (uracil(747)-C(5))-methyltransferase RlmC (376 aa).

4 residues coordinate [4Fe-4S] cluster: cysteine 3, cysteine 11, cysteine 14, and cysteine 88. S-adenosyl-L-methionine is bound by residues glutamine 213, phenylalanine 242, glutamate 263, and asparagine 308. Residue cysteine 335 is the Nucleophile of the active site.

Belongs to the class I-like SAM-binding methyltransferase superfamily. RNA M5U methyltransferase family. RlmC subfamily.

The catalysed reaction is uridine(747) in 23S rRNA + S-adenosyl-L-methionine = 5-methyluridine(747) in 23S rRNA + S-adenosyl-L-homocysteine + H(+). Functionally, catalyzes the formation of 5-methyl-uridine at position 747 (m5U747) in 23S rRNA. The sequence is that of 23S rRNA (uracil(747)-C(5))-methyltransferase RlmC from Vibrio vulnificus (strain CMCP6).